A 644-amino-acid chain; its full sequence is Exoribonuclease 2 (644 aa).

One can recognise an RNB domain in the interval 189–516 (REDLTALDFV…NHRLLKAVIK (328 aa)). The region spanning 561–643 (DTRFAAEIVD…ETRSIIARPV (83 aa)) is the S1 motif domain.

This sequence belongs to the RNR ribonuclease family. RNase II subfamily.

Its subcellular location is the cytoplasm. It carries out the reaction Exonucleolytic cleavage in the 3'- to 5'-direction to yield nucleoside 5'-phosphates.. Functionally, involved in mRNA degradation. Hydrolyzes single-stranded polyribonucleotides processively in the 3' to 5' direction. This is Exoribonuclease 2 from Escherichia coli O8 (strain IAI1).